A 560-amino-acid polypeptide reads, in one-letter code: Terminal uridylyltransferase Tailor (560 aa).

The disordered stretch occupies residues 169-197 (EQHPKPNPNNQPVQPHPTHQTKQEKKQAQ). Positions 176-188 (PNNQPVQPHPTHQ) are enriched in low complexity. The Mg(2+) site is built by Asp278 and Asp280. A PAP-associated domain is found at 455 to 522 (LRNFFAYFAK…VVQDPIQLNH (68 aa)).

The cofactor is Mg(2+).

The protein localises to the cytoplasm. The catalysed reaction is RNA(n) + UTP = RNA(n)-3'-uridine ribonucleotide + diphosphate. In terms of biological role, uridylyltransferase which mediates terminal uridylation of miRNAs, leading to their degradation. Has high specificity for splicing-derived miRNAs (mirtrons) and other miRNA substrates containing a 3'-G terminal nucleotide. Appears to be a major suppressor of mirtron biogenesis. The polypeptide is Terminal uridylyltransferase Tailor (Drosophila melanogaster (Fruit fly)).